The following is a 493-amino-acid chain: Amino acid permease 2 (493 aa).

Topologically, residues 1 to 49 (MGETAAANNHRHHHHHGHQVFDVASHDFVPPQPAFKCFDDDGRLKRTGT) are cytoplasmic. The next 2 helical transmembrane spans lie at 50–70 (VWTA…LSLA) and 71–91 (WAIA…FSLV). Over 92-138 (TLYSSTLLSDCYRTGDAVSGKRNYTYMDAVRSILGGFKFKICGLIQY) the chain is Cytoplasmic. Residues 139–159 (LNLFGIAIGYTIAASISMMAI) form a helical membrane-spanning segment. Residues 160–175 (KRSNCFHKSGGKDPCH) are Extracellular-facing. A helical transmembrane segment spans residues 176-196 (MSSNPYMIVFGVAEILLSQVP). The Cytoplasmic segment spans residues 197–200 (DFDQ). A helical transmembrane segment spans residues 201 to 221 (IWWISIVAAVMSFTYSAIGLA). Over 222 to 253 (LGIVQVAANGVFKGSLTGISIGTVTQTQKIWR) the chain is Extracellular. Residues 254–274 (TFQALGDIAFAYSYSVVLIEI) form a helical membrane-spanning segment. Residues 275–293 (QDTVRSPPAESKTMKKATK) are Cytoplasmic-facing. A helical transmembrane segment spans residues 294–314 (ISIAVTTIFYMLCGSMGYAAF). The Extracellular portion of the chain corresponds to 315–340 (GDAAPGNLLTGFGFYNPFWLLDIANA). Residues 341–361 (AIVVHLVGAYQVFAQPIFAFI) form a helical membrane-spanning segment. Residues 362–396 (EKSVAERYPDNDFLSKEFEIRIPGFKSPYKVNVFR) are Cytoplasmic-facing. The chain crosses the membrane as a helical span at residues 397–417 (MVYRSGFVVTTTVISMLMPFF). Residues 418–419 (ND) lie on the Extracellular side of the membrane. A helical membrane pass occupies residues 420–440 (VVGILGALGFWPLTVYFPVEM). The Cytoplasmic segment spans residues 441–458 (YIKQRKVEKWSTRWVCLQ). Residues 459-479 (MLSVACLVISVVAGVGSIAGV) traverse the membrane as a helical segment. Over 480-493 (MLDLKVYKPFKSTY) the chain is Extracellular.

Belongs to the amino acid/polyamine transporter 2 family. Amino acid/auxin permease (AAAP) (TC 2.A.18.2) subfamily. In terms of tissue distribution, highly expressed in developing pods. Found in the vascular strands of siliques, cotyledons, leaves and roots, in the inner phloem of stems, and in the funiculi. Lower levels of expression in flowers. Not expressed in seeds.

The protein resides in the cell membrane. Inhibited by diethylpyrocarbonate (DEPC). Amino acid-proton symporter. Stereospecific transporter with a broad specificity for histidine, arginine, glutamate and neutral amino acids, favoring small amino acids such as alanine, asparagine and glutamine. Also accepts large aromatic residues such as phenlalanine or tyrosine. Has a much higher affinity for basic amino acids as compared with AAP1. May function in xylem-to-phloem transfer and in uptake of amino acids assimilated in the green silique tissue. In Arabidopsis thaliana (Mouse-ear cress), this protein is Amino acid permease 2 (AAP2).